The sequence spans 29 residues: Glucagon (29 aa).

The protein belongs to the glucagon family.

The protein localises to the secreted. In terms of biological role, promotes hydrolysis of glycogen and lipids, and raises the blood sugar level. The protein is Glucagon (gcg) of Torpedo marmorata (Marbled electric ray).